Reading from the N-terminus, the 500-residue chain is Lysine--tRNA ligase (500 aa).

Residues Glu-410 and Glu-417 each contribute to the Mg(2+) site.

Belongs to the class-II aminoacyl-tRNA synthetase family. Homodimer. The cofactor is Mg(2+).

Its subcellular location is the cytoplasm. The catalysed reaction is tRNA(Lys) + L-lysine + ATP = L-lysyl-tRNA(Lys) + AMP + diphosphate. This chain is Lysine--tRNA ligase, found in Pseudomonas putida (strain ATCC 700007 / DSM 6899 / JCM 31910 / BCRC 17059 / LMG 24140 / F1).